The following is a 154-amino-acid chain: L-alanine exporter AlaE (154 aa).

The next 4 helical transmembrane spans lie at 21 to 41, 51 to 71, 90 to 110, and 115 to 135; these read FAMV…LSGM, LVAI…RDFF, ILAY…VIGA, and IVAA…VYGY.

The protein belongs to the AlaE exporter family.

The protein localises to the cell inner membrane. Functionally, exports L-alanine. The polypeptide is L-alanine exporter AlaE (Escherichia fergusonii (strain ATCC 35469 / DSM 13698 / CCUG 18766 / IAM 14443 / JCM 21226 / LMG 7866 / NBRC 102419 / NCTC 12128 / CDC 0568-73)).